Reading from the N-terminus, the 133-residue chain is Small ribosomal subunit protein uS8 (133 aa).

The disordered stretch occupies residues 1–32; the sequence is MANHDPISDMLTRIRNASEKRHESTKVPASRM. Residues 16-25 are compositionally biased toward basic and acidic residues; it reads NASEKRHEST.

Belongs to the universal ribosomal protein uS8 family. In terms of assembly, part of the 30S ribosomal subunit. Contacts proteins S5 and S12.

One of the primary rRNA binding proteins, it binds directly to 16S rRNA central domain where it helps coordinate assembly of the platform of the 30S subunit. This Synechococcus sp. (strain CC9311) protein is Small ribosomal subunit protein uS8.